A 238-amino-acid chain; its full sequence is MEVDTMETLIRLFVSILIICVLALMIKKSRCLDNEGVIGSSIMGFILLYFCGFKYLILLLSFFILGVLVSRVGLEKKKAKKMDETCRSLKNVLANGLIPILFAILAIFGFNWALIGYISSIAAATSDTFSSELGILSNEKPRLITTFEVVEKGTDGAITIFGTLAGVLGAFLIGLFGYLLFGDIKIVLCGTAGGIAGNLADSLVGALFERKGILNNEHVNLIATIVGGIIGVLIYCTL.

5 consecutive transmembrane segments (helical) span residues 6-26, 45-65, 98-118, 160-180, and 186-206; these read METLIRLFVSILIICVLALMI, FILLYFCGFKYLILLLSFFIL, IPILFAILAIFGFNWALIGYI, IFGTLAGVLGAFLIGLFGYLL, and IVLCGTAGGIAGNLADSLVGA.

The protein belongs to the TMEM19 family.

It is found in the cell membrane. This is an uncharacterized protein from Methanocaldococcus jannaschii (strain ATCC 43067 / DSM 2661 / JAL-1 / JCM 10045 / NBRC 100440) (Methanococcus jannaschii).